A 356-amino-acid chain; its full sequence is tRNA N6-adenosine threonylcarbamoyltransferase (356 aa).

Residues His-122, His-126, and Tyr-143 each coordinate a divalent metal cation. Substrate contacts are provided by residues 143-147 (YVSGG), Asp-175, Gly-190, Glu-194, and Asn-287. Asp-315 contacts a divalent metal cation.

Belongs to the KAE1 / TsaD family. Component of the EKC/KEOPS complex composed of at least BUD32, CGI121, GON7, KAE1 and PCC1; the whole complex dimerizes. A divalent metal cation is required as a cofactor.

The protein resides in the cytoplasm. The protein localises to the nucleus. The enzyme catalyses L-threonylcarbamoyladenylate + adenosine(37) in tRNA = N(6)-L-threonylcarbamoyladenosine(37) in tRNA + AMP + H(+). Its function is as follows. Component of the EKC/KEOPS complex that is required for the formation of a threonylcarbamoyl group on adenosine at position 37 (t(6)A37) in tRNAs that read codons beginning with adenine. The complex is probably involved in the transfer of the threonylcarbamoyl moiety of threonylcarbamoyl-AMP (TC-AMP) to the N6 group of A37. KAE1 likely plays a direct catalytic role in this reaction, but requires other protein(s) of the complex to fulfill this activity. The EKC/KEOPS complex also promotes both telomere uncapping and telomere elongation. The complex is required for efficient recruitment of transcriptional coactivators. The chain is tRNA N6-adenosine threonylcarbamoyltransferase from Chaetomium globosum (strain ATCC 6205 / CBS 148.51 / DSM 1962 / NBRC 6347 / NRRL 1970) (Soil fungus).